A 508-amino-acid chain; its full sequence is GATA zinc finger domain-containing protein 13 (508 aa).

2 disordered regions span residues 20–51 and 203–296; these read YSKN…INNN and MSII…PEIE. Positions 23 to 51 are enriched in low complexity; it reads NNNNNNNNNNNNNINNNNNNNNNNNINNN. Residues 203-224 show a composition bias toward polar residues; the sequence is MSIIPSDNFPTPQLPLETNTDL. A compositionally biased stretch (low complexity) spans 225-247; that stretch reads NNTSDCSSTTFSSPPSSAFNSPN. Residues 248 to 266 are compositionally biased toward polar residues; sequence LQNDYTQPQNQKSQSSTIV. The segment covering 269–279 has biased composition (basic residues); that stretch reads NSSKSKSKNNK. The GATA-type zinc finger occupies 327 to 354; it reads CSICKIKCSIYWRRILINEVRTSVCNAC. The stretch at 356–433 forms a coiled coil; sequence LRTMKKTKKE…NNNNNNNNNN (78 aa). Low complexity predominate over residues 399–482; sequence TTTTTTTTTS…NNNNNDNYND (84 aa). The segment at 399–484 is disordered; that stretch reads TTTTTTTTTS…NNNDNYNDSI (86 aa).

This chain is GATA zinc finger domain-containing protein 13 (gtaM), found in Dictyostelium discoideum (Social amoeba).